Reading from the N-terminus, the 345-residue chain is MSTPTPLSYKDAGVDIDAGNALVNNIKAAVKRTRRPEVMGNLGGFGALCELPTKYKQPVLVSGTDGVGTKLRLAIDYKKHDTVGIDLVAMCVNDLIVQGAEPLFFLDYYATGKLDVETATAVVNGIGEGCFQSGCALIGGETAEMPGMYEGEDYDLAGFCVGVVEKADIIDGSKVAAGDALIALASSGPHSNGYSLVRKVLEVSQADPQQDLNGKPLIQHLLEPTKIYVKSLLKLIEASDVHAMAHITGGGFWENIPRVLPENCKAVIQGDSWQWPAVFSWLMENGNIAEYEMYRTFNCGVGMIVALPADKVDAALALLAAEGEQAWLIGAIAAREGNEEQVEIL.

This sequence belongs to the AIR synthase family.

It localises to the cytoplasm. It catalyses the reaction 2-formamido-N(1)-(5-O-phospho-beta-D-ribosyl)acetamidine + ATP = 5-amino-1-(5-phospho-beta-D-ribosyl)imidazole + ADP + phosphate + H(+). Its pathway is purine metabolism; IMP biosynthesis via de novo pathway; 5-amino-1-(5-phospho-D-ribosyl)imidazole from N(2)-formyl-N(1)-(5-phospho-D-ribosyl)glycinamide: step 2/2. The chain is Phosphoribosylformylglycinamidine cyclo-ligase from Shewanella oneidensis (strain ATCC 700550 / JCM 31522 / CIP 106686 / LMG 19005 / NCIMB 14063 / MR-1).